A 588-amino-acid polypeptide reads, in one-letter code: Nuclear hormone receptor family member nhr-23 (588 aa).

The disordered stretch occupies residues 50–73 (LHAKSSLQPSLSIETPKSKENDES). The segment covering 52 to 64 (AKSSLQPSLSIET) has biased composition (polar residues). Positions 160–235 (VIPCKVCGDK…LGMSRDAVKF (76 aa)) form a DNA-binding region, nuclear receptor. NR C4-type zinc fingers lie at residues 163–183 (CKVC…CEGC) and 199–223 (CPRQ…LKKC). The 242-residue stretch at 345-586 (PEEDVATRVI…ALYKELFTAD (242 aa)) folds into the NR LBD domain.

This sequence belongs to the nuclear hormone receptor family. NR1 subfamily. Expressed in the germline and oocytes and is a maternal gene product. In males and sperm-producing hermaphrodites, expressed in early pachytene spermatocytes, increasing in level throughout late pachytene. Expression is undetectable in meiotically dividing spermatocytes or mature spermatids.

It localises to the nucleus. Its function is as follows. Orphan nuclear receptor. Transcription factor. Modulates expression of target genes, such as Period protein homolog lin-42 and microRNA let-7, by binding to hormone response elements (HRE). Involved in promoting oscillatory expression of the primary transcripts of let-7 and paralogous microRNAs miR-48, miR-84, and miR-241. Plays a role in normal development and required to regulate each larval molt. Involved in regulating both the frequency and number of molts, acting as part of a negative feedback loop with the let-7 family of microRNAs, perhaps contributing to a self-sustaining molecular-genetic oscillator. Positively modulates expression of collagen and hedgehog-related genes. Involved in development of the gonad and associated epidermal structures. Required in spermatogenesis, acting following the sperm/oocyte cell fate decision, downstream of the canonical sex-determination pathway. Involved in regulating formation of the sperm-specific fibrous body-membranous organelle (FB-MO) complexes, acting independently of transcription regulator spe-44. This Caenorhabditis elegans protein is Nuclear hormone receptor family member nhr-23.